We begin with the raw amino-acid sequence, 475 residues long: Ribulose bisphosphate carboxylase large chain (475 aa).

The propeptide occupies 1 to 2 (MS). N-acetylproline is present on Pro3. Lys14 carries the post-translational modification N6,N6,N6-trimethyllysine. Residues Asn123 and Thr173 each coordinate substrate. The Proton acceptor role is filled by Lys175. Lys177 contributes to the substrate binding site. Residues Lys201, Asp203, and Glu204 each coordinate Mg(2+). Lys201 carries the post-translational modification N6-carboxylysine. His294 functions as the Proton acceptor in the catalytic mechanism. Arg295, His327, and Ser379 together coordinate substrate.

It belongs to the RuBisCO large chain family. Type I subfamily. Heterohexadecamer of 8 large chains and 8 small chains; disulfide-linked. The disulfide link is formed within the large subunit homodimers. Mg(2+) serves as cofactor. The disulfide bond which can form in the large chain dimeric partners within the hexadecamer appears to be associated with oxidative stress and protein turnover.

Its subcellular location is the plastid. It localises to the chloroplast. The enzyme catalyses 2 (2R)-3-phosphoglycerate + 2 H(+) = D-ribulose 1,5-bisphosphate + CO2 + H2O. It carries out the reaction D-ribulose 1,5-bisphosphate + O2 = 2-phosphoglycolate + (2R)-3-phosphoglycerate + 2 H(+). Its function is as follows. RuBisCO catalyzes two reactions: the carboxylation of D-ribulose 1,5-bisphosphate, the primary event in carbon dioxide fixation, as well as the oxidative fragmentation of the pentose substrate in the photorespiration process. Both reactions occur simultaneously and in competition at the same active site. This is Ribulose bisphosphate carboxylase large chain from Notothixos subaureus (Golden mistletoe).